Reading from the N-terminus, the 494-residue chain is V-type proton ATPase subunit B (494 aa).

This sequence belongs to the ATPase alpha/beta chains family. V-ATPase is a heteromultimeric enzyme composed of a peripheral catalytic V1 complex (main components: subunits A, B, C, D, E, and F) attached to an integral membrane V0 proton pore complex (main component: the proteolipid protein).

Non-catalytic subunit of the peripheral V1 complex of vacuolar ATPase. V-ATPase is responsible for acidifying a variety of intracellular compartments in eukaryotic cells. The protein is V-type proton ATPase subunit B (VAPB) of Plasmodium falciparum.